A 192-amino-acid chain; its full sequence is UPF0312 protein PSPTO_5071 (192 aa).

Positions 1–23 are cleaved as a signal peptide; that stretch reads MLKKSLAALALGTALLSAGQAMA.

This sequence belongs to the UPF0312 family. Type 1 subfamily.

The protein resides in the periplasm. The sequence is that of UPF0312 protein PSPTO_5071 from Pseudomonas syringae pv. tomato (strain ATCC BAA-871 / DC3000).